The following is a 143-amino-acid chain: Transcriptional regulator MraZ (143 aa).

2 SpoVT-AbrB domains span residues 5-47 and 76-119; these read EYRH…TQEE and ATEC…SEDR.

Belongs to the MraZ family. As to quaternary structure, forms oligomers.

Its subcellular location is the cytoplasm. It localises to the nucleoid. The polypeptide is Transcriptional regulator MraZ (Ligilactobacillus salivarius (strain UCC118) (Lactobacillus salivarius)).